Here is a 138-residue protein sequence, read N- to C-terminus: Cytochrome b5 (138 aa).

The region spanning 14 to 90 (GRYYRLEEVQ…SETFIIGELH (77 aa)) is the Cytochrome b5 heme-binding domain. Residues His49 and His73 each coordinate heme. Residues 114-136 (SWSNWVIPAIAAIIVALMYRSYM) traverse the membrane as a helical segment.

It belongs to the cytochrome b5 family.

It localises to the endoplasmic reticulum membrane. The protein localises to the microsome membrane. In terms of biological role, cytochrome b5 is a membrane-bound hemoprotein functioning as an electron carrier for several membrane-bound oxygenases. This Gallus gallus (Chicken) protein is Cytochrome b5 (CYB5A).